The sequence spans 64 residues: Large ribosomal subunit protein bL32 (64 aa).

Positions 1–35 (MAVQKSRVTPSRRGMRRAHDALSAKQLSTDPTTGE) are disordered.

It belongs to the bacterial ribosomal protein bL32 family.

The sequence is that of Large ribosomal subunit protein bL32 from Stenotrophomonas maltophilia (strain R551-3).